We begin with the raw amino-acid sequence, 198 residues long: Small ribosomal subunit protein uS4c (198 aa).

The disordered stretch occupies residues 17-40; sequence TLPGLTSKRPKNRKDSMNRSSSRK. The region spanning 88 to 154 is the S4 RNA-binding domain; the sequence is MRLDKSFSIG…IKKNIDLFQR (67 aa).

It belongs to the universal ribosomal protein uS4 family. Part of the 30S ribosomal subunit. Contacts protein S5. The interaction surface between S4 and S5 is involved in control of translational fidelity.

The protein resides in the plastid. The protein localises to the chloroplast. One of the primary rRNA binding proteins, it binds directly to 16S rRNA where it nucleates assembly of the body of the 30S subunit. In terms of biological role, with S5 and S12 plays an important role in translational accuracy. The sequence is that of Small ribosomal subunit protein uS4c (rps4) from Pinus thunbergii (Japanese black pine).